We begin with the raw amino-acid sequence, 129 residues long: Small ribosomal subunit protein uS9 (129 aa).

Belongs to the universal ribosomal protein uS9 family.

This chain is Small ribosomal subunit protein uS9 (rps9), found in Thermoplasma acidophilum (strain ATCC 25905 / DSM 1728 / JCM 9062 / NBRC 15155 / AMRC-C165).